The following is a 715-amino-acid chain: 1,4-alpha-glucan branching enzyme GlgB (715 aa).

Asp-396 functions as the Nucleophile in the catalytic mechanism. The active-site Proton donor is Glu-449.

Belongs to the glycosyl hydrolase 13 family. GlgB subfamily. In terms of assembly, monomer.

The enzyme catalyses Transfers a segment of a (1-&gt;4)-alpha-D-glucan chain to a primary hydroxy group in a similar glucan chain.. Its pathway is glycan biosynthesis; glycogen biosynthesis. Catalyzes the formation of the alpha-1,6-glucosidic linkages in glycogen by scission of a 1,4-alpha-linked oligosaccharide from growing alpha-1,4-glucan chains and the subsequent attachment of the oligosaccharide to the alpha-1,6 position. The protein is 1,4-alpha-glucan branching enzyme GlgB of Vibrio vulnificus (strain CMCP6).